A 142-amino-acid chain; its full sequence is Small ribosomal subunit protein uS12 (142 aa).

Belongs to the universal ribosomal protein uS12 family. Part of the 30S ribosomal subunit.

With S4 and S5 plays an important role in translational accuracy. Located at the interface of the 30S and 50S subunits. The chain is Small ribosomal subunit protein uS12 from Methanoculleus marisnigri (strain ATCC 35101 / DSM 1498 / JR1).